Reading from the N-terminus, the 423-residue chain is MSNDSIKLIDEIGKKARKAARQLAWLDSGSKNATLHAMADALIACKKILQVENEKDLEAGEKNGLTDAMLDRLRLTDQVIASMAEGIRQVAALPDPIGEINHMRRLANQLQVGKMRVPLGVIGIIYESRPNVTADAAALCVKSGNAVILRGGSEAFHSNRAIAAALAQGMEKGRVPSDAVQVVSTTDRAAVSALLKADQYVDIIIPRGGKGLIQRVMDEATIPVIKHLDGICHTYIDADADPAKAIDITFNGKMQRTGVCNATETLLIHEKVAKTILPALAKRLNQADCVLRGCPETIRLVGEVAPVIPATEEDWDTEYLAAILAIRVVKNLEEAMDHIDAHSSRHTEVIVTENHATAMRFVREVDASAVMVNASSRFNDGFQFGLGAEMGISTDKLHVRGPVGLEGLTCEKWIVLGDGQLRS.

The protein belongs to the gamma-glutamyl phosphate reductase family.

Its subcellular location is the cytoplasm. It carries out the reaction L-glutamate 5-semialdehyde + phosphate + NADP(+) = L-glutamyl 5-phosphate + NADPH + H(+). It participates in amino-acid biosynthesis; L-proline biosynthesis; L-glutamate 5-semialdehyde from L-glutamate: step 2/2. Catalyzes the NADPH-dependent reduction of L-glutamate 5-phosphate into L-glutamate 5-semialdehyde and phosphate. The product spontaneously undergoes cyclization to form 1-pyrroline-5-carboxylate. The polypeptide is Gamma-glutamyl phosphate reductase (Magnetococcus marinus (strain ATCC BAA-1437 / JCM 17883 / MC-1)).